The sequence spans 172 residues: 6,7-dimethyl-8-ribityllumazine synthase (172 aa).

Residues Phe22 and 56–58 (AFE) each bind 5-amino-6-(D-ribitylamino)uracil. 78–79 (LG) contacts (2S)-2-hydroxy-3-oxobutyl phosphate. Residue 80 to 82 (AII) coordinates 5-amino-6-(D-ribitylamino)uracil. His88 (proton donor) is an active-site residue. Phe113 contacts 5-amino-6-(D-ribitylamino)uracil. Residue Arg127 participates in (2S)-2-hydroxy-3-oxobutyl phosphate binding.

The protein belongs to the DMRL synthase family.

It carries out the reaction (2S)-2-hydroxy-3-oxobutyl phosphate + 5-amino-6-(D-ribitylamino)uracil = 6,7-dimethyl-8-(1-D-ribityl)lumazine + phosphate + 2 H2O + H(+). Its pathway is cofactor biosynthesis; riboflavin biosynthesis; riboflavin from 2-hydroxy-3-oxobutyl phosphate and 5-amino-6-(D-ribitylamino)uracil: step 1/2. In terms of biological role, catalyzes the formation of 6,7-dimethyl-8-ribityllumazine by condensation of 5-amino-6-(D-ribitylamino)uracil with 3,4-dihydroxy-2-butanone 4-phosphate. This is the penultimate step in the biosynthesis of riboflavin. The chain is 6,7-dimethyl-8-ribityllumazine synthase from Protochlamydia amoebophila (strain UWE25).